The following is a 153-amino-acid chain: UPF0743 protein YCR087C-A (153 aa).

C2HC LYAR-type zinc fingers lie at residues 1–26 (MVTFNCEVCNDTVPKKNTEKHYYRCP) and 27–52 (NAYYTCIDCSKTFEDGVSYKNHTSCI). Cys6, Cys9, His21, Cys25, Cys32, Cys35, His48, and Cys51 together coordinate Zn(2+). Residues 63–96 (YKGNKKQKQKQQQKQQQKQHQHQPVATPAKKVEK) are disordered. Basic residues predominate over residues 65–83 (GNKKQKQKQQQKQQQKQHQ).

Belongs to the UPF0743 family.

The protein resides in the nucleus. It is found in the nucleolus. The protein is UPF0743 protein YCR087C-A of Saccharomyces cerevisiae (strain ATCC 204508 / S288c) (Baker's yeast).